The following is a 493-amino-acid chain: Polyamine aminopropyltransferase 2 (493 aa).

7 consecutive transmembrane segments (helical) span residues 9–29, 32–52, 68–88, 101–121, 137–157, 161–181, and 188–208; these read LCIFFTGFAGIVAEYSLATLA, LLGNAVLQWSVVISIFLLSMG, LAFVLAELFLSLLVPFSVPIA, VIYGLSFVIGSLIGLEIPLAV, VLEKDYLGSVPAGLLYAYLFL, GLPLTAILAGFFNLISAFLLV, and KFLKFLAIFTFFLLATYAVGH. Residues 187 to 448 form a spermidine synthase region; sequence KKFLKFLAIF…PLNFENFELK (262 aa). A PABS domain is found at 202–437; the sequence is ATYAVGHKRI…GEWGMVIGSK (236 aa). Position 233 (glutamine 233) interacts with S-methyl-5'-thioadenosine. Spermidine is bound by residues histidine 263 and aspartate 287. S-methyl-5'-thioadenosine-binding positions include aspartate 306 and 340–341; that span reads DA. Catalysis depends on aspartate 358, which acts as the Proton acceptor.

The protein belongs to the spermidine/spermine synthase family. Homodimer or homotetramer.

It localises to the cell membrane. The enzyme catalyses S-adenosyl 3-(methylsulfanyl)propylamine + putrescine = S-methyl-5'-thioadenosine + spermidine + H(+). The protein operates within amine and polyamine biosynthesis; spermidine biosynthesis; spermidine from putrescine: step 1/1. Functionally, catalyzes the irreversible transfer of a propylamine group from the amino donor S-adenosylmethioninamine (decarboxy-AdoMet) to putrescine (1,4-diaminobutane) to yield spermidine. The sequence is that of Polyamine aminopropyltransferase 2 from Aquifex aeolicus (strain VF5).